Here is a 484-residue protein sequence, read N- to C-terminus: Sulfoacetaldehyde dehydrogenase (484 aa).

Residues 105–110, Gly188, and Gly206 each bind NAD(+); that span reads LTPVTN. Cys239 functions as the Nucleophile in the catalytic mechanism. The NAD(+) site is built by Glu332 and Leu412.

This sequence belongs to the aldehyde dehydrogenase family.

It carries out the reaction sulfoacetaldehyde + NAD(+) + CoA = sulfoacetyl-CoA + NADH + H(+). Part of a variant of the sulfo-TK pathway, a D-sulfoquinovose degradation pathway that produces sulfoacetate. Catalyzes the oxidation of sulfoacetaldehyde (SA) to sulfoacetyl-coenzyme A (sulfoacetyl-CoA). Is highly specific for NAD(+), with only residual (1%) activity with NADP(+). Cannot use acetaldehyde. The polypeptide is Sulfoacetaldehyde dehydrogenase (Acholeplasma sp).